The primary structure comprises 156 residues: Transcription antitermination protein NusB (156 aa).

It belongs to the NusB family.

Involved in transcription antitermination. Required for transcription of ribosomal RNA (rRNA) genes. Binds specifically to the boxA antiterminator sequence of the ribosomal RNA (rrn) operons. The sequence is that of Transcription antitermination protein NusB from Bartonella tribocorum (strain CIP 105476 / IBS 506).